The sequence spans 251 residues: 3-deoxy-manno-octulosonate cytidylyltransferase (251 aa).

The protein belongs to the KdsB family.

It localises to the cytoplasm. The catalysed reaction is 3-deoxy-alpha-D-manno-oct-2-ulosonate + CTP = CMP-3-deoxy-beta-D-manno-octulosonate + diphosphate. It functions in the pathway nucleotide-sugar biosynthesis; CMP-3-deoxy-D-manno-octulosonate biosynthesis; CMP-3-deoxy-D-manno-octulosonate from 3-deoxy-D-manno-octulosonate and CTP: step 1/1. The protein operates within bacterial outer membrane biogenesis; lipopolysaccharide biosynthesis. Functionally, activates KDO (a required 8-carbon sugar) for incorporation into bacterial lipopolysaccharide in Gram-negative bacteria. The chain is 3-deoxy-manno-octulosonate cytidylyltransferase from Chromobacterium violaceum (strain ATCC 12472 / DSM 30191 / JCM 1249 / CCUG 213 / NBRC 12614 / NCIMB 9131 / NCTC 9757 / MK).